The sequence spans 172 residues: Large ribosomal subunit protein uL10 (172 aa).

Belongs to the universal ribosomal protein uL10 family. As to quaternary structure, part of the ribosomal stalk of the 50S ribosomal subunit. The N-terminus interacts with L11 and the large rRNA to form the base of the stalk. The C-terminus forms an elongated spine to which L12 dimers bind in a sequential fashion forming a multimeric L10(L12)X complex.

In terms of biological role, forms part of the ribosomal stalk, playing a central role in the interaction of the ribosome with GTP-bound translation factors. This Methylorubrum populi (strain ATCC BAA-705 / NCIMB 13946 / BJ001) (Methylobacterium populi) protein is Large ribosomal subunit protein uL10.